Here is a 328-residue protein sequence, read N- to C-terminus: Mitochondrial GTPase 1 (328 aa).

In terms of domain architecture, CP-type G spans 23-211 (NKTLKRLKNL…MLDTPGIMTP (189 aa)). GTP is bound by residues 70 to 73 (NKCD), 155 to 160 (NTGKSS), and Gly-207.

The protein belongs to the TRAFAC class YlqF/YawG GTPase family. MTG1 subfamily.

The protein localises to the mitochondrion inner membrane. In terms of biological role, mitochondrial GTPase involved in assembly of the large ribosomal subunit. Plays a role in expression of the mitochondrial translational machinery. This is Mitochondrial GTPase 1 (mtg1) from Schizosaccharomyces pombe (strain 972 / ATCC 24843) (Fission yeast).